The following is a 425-amino-acid chain: UPF0597 protein Swoo_4889 (425 aa).

Belongs to the UPF0597 family.

The sequence is that of UPF0597 protein Swoo_4889 from Shewanella woodyi (strain ATCC 51908 / MS32).